The sequence spans 106 residues: MTLRDILNKLMGRQPASAAKARERLQLVLAHDRTDLSPDLLEQMREEILSVVAKYVEIDFEEGAVSLETEDRMTALVANLPIKRTLSGEIKIKEQSSADNSAKAVS.

This sequence belongs to the MinE family.

In terms of biological role, prevents the cell division inhibition by proteins MinC and MinD at internal division sites while permitting inhibition at polar sites. This ensures cell division at the proper site by restricting the formation of a division septum at the midpoint of the long axis of the cell. This Prochlorococcus marinus (strain SARG / CCMP1375 / SS120) protein is Cell division topological specificity factor.